The primary structure comprises 438 residues: Polycomb protein eed-A (438 aa).

A disordered region spans residues 1-67; that stretch reads MSEASGRAAG…NAPGRKAWGK (67 aa). Residues 40–57 are compositionally biased toward polar residues; the sequence is SIESGTNTERPDTPTNAA. WD repeat units follow at residues 88–131, 139–182, 185–225, 231–270, 301–338, 356–396, and 405–438; these read DHNQ…DIRL, DADE…CIKH, GHGN…LVAI, GHRD…MKTA, IHRN…DDID, SQCD…PHKA, and KCAS…DRLR.

Belongs to the WD repeat ESC family. As to quaternary structure, component of the prc2/eed-ezh2 complex. Interacts with yy1. Can interact with ezh2, hdac1 and taf9.

Its subcellular location is the nucleus. Its function is as follows. Polycomb group (PcG) protein. Component of the prc2/eed-ezh2 complex, which methylates 'Lys-9' and 'Lys-27' of histone H3, leading to transcriptional repression of the affected target gene. The sequence is that of Polycomb protein eed-A (eed-a) from Xenopus laevis (African clawed frog).